The primary structure comprises 238 residues: Transcriptional repressor ThaA (238 aa).

The 66-residue stretch at 169-234 folds into the HTH luxR-type domain; it reads IPGEIARVSL…HAAVKATLVG (66 aa). Residues 193-212 constitute a DNA-binding region (H-T-H motif); sequence VSEISSILQMSVRNINFHIQ.

Belongs to the autoinducer-regulated transcriptional regulatory protein family.

In terms of biological role, represses thailandamide production. The chain is Transcriptional repressor ThaA from Burkholderia thailandensis (strain ATCC 700388 / DSM 13276 / CCUG 48851 / CIP 106301 / E264).